The primary structure comprises 347 residues: Probable inactive UDP-arabinopyranose mutase 2 (347 aa).

N-linked (Glc...) arginine glycosylation occurs at Arg145.

It belongs to the RGP family. As to quaternary structure, heteromers with UAM1 and UAM3. In terms of processing, is not reversibly glycosylated in vitro by UDP-glucose, UDP-xylose and UDP-galactose.

It localises to the golgi apparatus. Functionally, probable inactive UDP-L-arabinose mutase. Inactive in vitro, but associates with UAM1 and UAM3. The sequence is that of Probable inactive UDP-arabinopyranose mutase 2 from Oryza sativa subsp. japonica (Rice).